The sequence spans 378 residues: Merozoite surface protein P41 (378 aa).

Residues 1–20 form the signal peptide; it reads MKGVIFCLVVLLWRQAWVSS. Residues 21–133 form the 6-Cys 1 domain; that stretch reads KSHKCDFTKE…LKINRFLKDD (113 aa). 3 cysteine pairs are disulfide-bonded: C25–C42, C56–C113, and C64–C111. Residues N77, N149, N182, and N205 are each glycosylated (N-linked (GlcNAc...) asparagine). In terms of domain architecture, 6-Cys 2 spans 241-375; that stretch reads VIKGCDFGNN…GESEVVLNSF (135 aa). 3 cysteine pairs are disulfide-bonded: C245/C270, C284/C348, and C297/C346. N-linked (GlcNAc...) asparagine glycosylation is present at N351.

As to quaternary structure, heterodimer; heterodimerizes with PF12. May form an antiparallel heterodimer with PF12. Processed into a soluble form.

Its subcellular location is the cell surface. It is found in the cell membrane. The chain is Merozoite surface protein P41 (PF41) from Plasmodium falciparum (isolate 3D7).